We begin with the raw amino-acid sequence, 64 residues long: Large ribosomal subunit protein bL35 (64 aa).

The protein belongs to the bacterial ribosomal protein bL35 family.

This is Large ribosomal subunit protein bL35 from Shewanella sediminis (strain HAW-EB3).